Reading from the N-terminus, the 432-residue chain is Enolase (432 aa).

Q167 is a binding site for (2R)-2-phosphoglycerate. The Proton donor role is filled by E209. Residues D246, E289, and D316 each contribute to the Mg(2+) site. (2R)-2-phosphoglycerate contacts are provided by K341, R370, S371, and K392. Residue K341 is the Proton acceptor of the active site.

This sequence belongs to the enolase family. Requires Mg(2+) as cofactor.

The protein localises to the cytoplasm. It is found in the secreted. Its subcellular location is the cell surface. It carries out the reaction (2R)-2-phosphoglycerate = phosphoenolpyruvate + H2O. The protein operates within carbohydrate degradation; glycolysis; pyruvate from D-glyceraldehyde 3-phosphate: step 4/5. Catalyzes the reversible conversion of 2-phosphoglycerate (2-PG) into phosphoenolpyruvate (PEP). It is essential for the degradation of carbohydrates via glycolysis. The protein is Enolase of Petrotoga mobilis (strain DSM 10674 / SJ95).